A 202-amino-acid chain; its full sequence is Protein EMBRYO DEFECTIVE 514 (202 aa).

2 disordered regions span residues 1–69 (MAEE…PVKL) and 168–202 (MKTP…RFRR). N-acetylalanine is present on A2. Basic and acidic residues-rich tracts occupy residues 33 to 42 (ETGDEKRERE) and 51 to 65 (GESK…EKSG). The span at 174 to 202 (NGNGHGGGRGGGGGRRGGRGGGRGGRFRR) shows a compositional bias: gly residues.

In terms of tissue distribution, expressed in leaves, flowers and embryos at globular stage.

The protein localises to the nucleus. In terms of biological role, may play a role in ribosome biogenesis and in determining the rate of cell division. Involved in a process essential for nuclear and nucleolar functions. In Arabidopsis thaliana (Mouse-ear cress), this protein is Protein EMBRYO DEFECTIVE 514.